The following is a 228-amino-acid chain: Ribosomal RNA small subunit methyltransferase G (228 aa).

S-adenosyl-L-methionine is bound by residues Gly89, Leu94, 140-141 (VE), and Arg159.

It belongs to the methyltransferase superfamily. RNA methyltransferase RsmG family.

The protein localises to the cytoplasm. It catalyses the reaction guanosine(527) in 16S rRNA + S-adenosyl-L-methionine = N(7)-methylguanosine(527) in 16S rRNA + S-adenosyl-L-homocysteine. In terms of biological role, specifically methylates the N7 position of guanine in position 527 of 16S rRNA. This is Ribosomal RNA small subunit methyltransferase G from Burkholderia vietnamiensis (strain G4 / LMG 22486) (Burkholderia cepacia (strain R1808)).